The sequence spans 124 residues: S-adenosylmethionine decarboxylase proenzyme (124 aa).

Catalysis depends on S63, which acts as the Schiff-base intermediate with substrate; via pyruvic acid. S63 is modified (pyruvic acid (Ser); by autocatalysis). H68 serves as the catalytic Proton acceptor; for processing activity. Residue C83 is the Proton donor; for catalytic activity of the active site.

This sequence belongs to the prokaryotic AdoMetDC family. Type 1 subfamily. As to quaternary structure, heterotetramer of two alpha and two beta chains arranged as a dimer of alpha/beta heterodimers. Pyruvate serves as cofactor. Is synthesized initially as an inactive proenzyme. Formation of the active enzyme involves a self-maturation process in which the active site pyruvoyl group is generated from an internal serine residue via an autocatalytic post-translational modification. Two non-identical subunits are generated from the proenzyme in this reaction, and the pyruvate is formed at the N-terminus of the alpha chain, which is derived from the carboxyl end of the proenzyme. The post-translation cleavage follows an unusual pathway, termed non-hydrolytic serinolysis, in which the side chain hydroxyl group of the serine supplies its oxygen atom to form the C-terminus of the beta chain, while the remainder of the serine residue undergoes an oxidative deamination to produce ammonia and the pyruvoyl group blocking the N-terminus of the alpha chain.

It carries out the reaction S-adenosyl-L-methionine + H(+) = S-adenosyl 3-(methylsulfanyl)propylamine + CO2. The protein operates within amine and polyamine biosynthesis; S-adenosylmethioninamine biosynthesis; S-adenosylmethioninamine from S-adenosyl-L-methionine: step 1/1. Catalyzes the decarboxylation of S-adenosylmethionine to S-adenosylmethioninamine (dcAdoMet), the propylamine donor required for the synthesis of the polyamines spermine and spermidine from the diamine putrescine. In Geobacillus sp. (strain WCH70), this protein is S-adenosylmethionine decarboxylase proenzyme.